We begin with the raw amino-acid sequence, 511 residues long: Ulvan-active sulfatase (511 aa).

An N-terminal signal peptide occupies residues 1–34 (MNFKQNIVYKKMAISMKITAIRPIALVISFTLLS). Residue cysteine 35 is the site of N-palmitoyl cysteine attachment. A lipid anchor (S-diacylglycerol cysteine) is attached at cysteine 35. 2 residues coordinate Ca(2+): aspartate 59 and cysteine 99. The Nucleophile role is filled by cysteine 99. Cysteine 99 bears the 3-oxoalanine (Cys) mark. Histidine 149 is an active-site residue. Ca(2+) is bound at residue aspartate 305.

The protein belongs to the sulfatase family. It depends on Ca(2+) as a cofactor. Post-translationally, the conversion to 3-oxoalanine (also known as C-formylglycine, FGly), of a serine or cysteine residue in prokaryotes and of a cysteine residue in eukaryotes, is critical for catalytic activity. This post-translational modification is severely defective in multiple sulfatase deficiency (MSD).

It localises to the cell membrane. Sulfatase involved in ulvan degradation. Ulvan is the main polysaccharide component of the Ulvales (green seaweed) cell wall. It is composed of disaccharide building blocks comprising 3-sulfated rhamnose (Rha3S) linked to D-glucuronic acid (GlcA), L-iduronic acid (IduA), or D-xylose (Xyl). The protein is Ulvan-active sulfatase of Formosa agariphila (strain DSM 15362 / KCTC 12365 / LMG 23005 / KMM 3901 / M-2Alg 35-1).